The chain runs to 272 residues: Putative pyruvate, phosphate dikinase regulatory protein (272 aa).

Residue 153-160 (GVSRTSKT) participates in ADP binding.

The protein belongs to the pyruvate, phosphate/water dikinase regulatory protein family. PDRP subfamily.

The enzyme catalyses N(tele)-phospho-L-histidyl/L-threonyl-[pyruvate, phosphate dikinase] + ADP = N(tele)-phospho-L-histidyl/O-phospho-L-threonyl-[pyruvate, phosphate dikinase] + AMP + H(+). It catalyses the reaction N(tele)-phospho-L-histidyl/O-phospho-L-threonyl-[pyruvate, phosphate dikinase] + phosphate + H(+) = N(tele)-phospho-L-histidyl/L-threonyl-[pyruvate, phosphate dikinase] + diphosphate. In terms of biological role, bifunctional serine/threonine kinase and phosphorylase involved in the regulation of the pyruvate, phosphate dikinase (PPDK) by catalyzing its phosphorylation/dephosphorylation. The protein is Putative pyruvate, phosphate dikinase regulatory protein of Streptococcus sanguinis (strain SK36).